The primary structure comprises 1323 residues: Alpha-factor-transporting ATPase (1323 aa).

The segment covering M1–S10 has biased composition (basic and acidic residues). Positions M1 to D23 are disordered. The span at P12–D23 shows a compositional bias: low complexity. An N-linked (GlcNAc...) asparagine glycan is attached at N37. The chain crosses the membrane as a helical span at residues W42–N62. Residues I45–T337 form the ABC transmembrane type-1 1 domain. N83 carries an N-linked (GlcNAc...) asparagine glycan. Residues L93–F113 form a helical membrane-spanning segment. An N-linked (GlcNAc...) asparagine glycan is attached at N136. The next 4 membrane-spanning stretches (helical) occupy residues I169–Y189, W192–F212, V281–L301, and F315–L335. The ABC transporter 1 domain occupies I373–G609. G408–S415 is an ATP binding site. N450 carries an N-linked (GlcNAc...) asparagine glycan. Residues L677–Y697 traverse the membrane as a helical segment. In terms of domain architecture, ABC transmembrane type-1 2 spans L678–R969. N714 carries N-linked (GlcNAc...) asparagine glycosylation. Residues C724–L744 traverse the membrane as a helical segment. Residues N777 and N789 are each glycosylated (N-linked (GlcNAc...) asparagine). 3 helical membrane-spanning segments follow: residues F801 to V821, L828 to L848, and I909 to G929. N-linked (GlcNAc...) asparagine glycosylation is present at N939. The helical transmembrane segment at S941 to I961 threads the bilayer. Residues N991, N1030, and N1039 are each glycosylated (N-linked (GlcNAc...) asparagine). Residues I1035 to T1321 enclose the ABC transporter 2 domain. Residue G1071–S1078 coordinates ATP. N-linked (GlcNAc...) asparagine glycosylation occurs at N1097. The chain crosses the membrane as a helical span at residues G1120–I1140. 3 N-linked (GlcNAc...) asparagine glycosylation sites follow: N1143, N1149, and N1157. Residues I1170–I1190 form a helical membrane-spanning segment. N-linked (GlcNAc...) asparagine glycosylation is present at N1192. Positions S1194–N1208 are enriched in acidic residues. A disordered region spans residues S1194 to S1217.

It belongs to the ABC transporter superfamily. Alpha-factor sex pheromone exporter (TC 3.A.1.206) family.

The protein localises to the membrane. The catalysed reaction is an [alpha-factor](in) + ATP + H2O = an [alpha-factor](out) + ADP + phosphate + H(+). In Candida albicans (strain WO-1) (Yeast), this protein is Alpha-factor-transporting ATPase (HST6).